The following is a 101-amino-acid chain: Ubiquitin-related modifier 1 (101 aa).

Residue Gly-101 is modified to 1-thioglycine. Gly-101 participates in a covalent cross-link: Glycyl lysine isopeptide (Gly-Lys) (interchain with K-? in acceptor proteins).

Belongs to the URM1 family. Post-translationally, C-terminal thiocarboxylation occurs in 2 steps, it is first acyl-adenylated (-COAMP) via the hesA/moeB/thiF part of the MOCS3 homolog, then thiocarboxylated (-COSH) via the rhodanese domain of the MOCS3 homolog.

Its subcellular location is the cytoplasm. It participates in tRNA modification; 5-methoxycarbonylmethyl-2-thiouridine-tRNA biosynthesis. Its function is as follows. Acts as a sulfur carrier required for 2-thiolation of mcm(5)S(2)U at tRNA wobble positions of cytosolic tRNA(Lys), tRNA(Glu) and tRNA(Gln). Serves as sulfur donor in tRNA 2-thiolation reaction by being thiocarboxylated (-COSH) at its C-terminus by MOCS3. The sulfur is then transferred to tRNA to form 2-thiolation of mcm(5)S(2)U. Also acts as a ubiquitin-like protein (UBL) that is covalently conjugated via an isopeptide bond to lysine residues of target proteins. The thiocarboxylated form serves as substrate for conjugation and oxidative stress specifically induces the formation of UBL-protein conjugates. The protein is Ubiquitin-related modifier 1 of Gallus gallus (Chicken).